A 58-amino-acid chain; its full sequence is Large ribosomal subunit protein uL30 (58 aa).

It belongs to the universal ribosomal protein uL30 family. Part of the 50S ribosomal subunit.

This Phocaeicola vulgatus (strain ATCC 8482 / DSM 1447 / JCM 5826 / CCUG 4940 / NBRC 14291 / NCTC 11154) (Bacteroides vulgatus) protein is Large ribosomal subunit protein uL30.